Reading from the N-terminus, the 98-residue chain is NADH-ubiquinone oxidoreductase chain 4L (98 aa).

The next 3 membrane-spanning stretches (helical) occupy residues 2–22, 29–49, and 61–81; these read PSIF…TLVF, SLLC…LIIL, and ILLL…LVMV.

It belongs to the complex I subunit 4L family. As to quaternary structure, core subunit of respiratory chain NADH dehydrogenase (Complex I) which is composed of 45 different subunits.

The protein localises to the mitochondrion inner membrane. The catalysed reaction is a ubiquinone + NADH + 5 H(+)(in) = a ubiquinol + NAD(+) + 4 H(+)(out). Its function is as follows. Core subunit of the mitochondrial membrane respiratory chain NADH dehydrogenase (Complex I) which catalyzes electron transfer from NADH through the respiratory chain, using ubiquinone as an electron acceptor. Part of the enzyme membrane arm which is embedded in the lipid bilayer and involved in proton translocation. The chain is NADH-ubiquinone oxidoreductase chain 4L (MT-ND4L) from Propithecus tattersalli (Golden-crowned Sifaka).